The sequence spans 256 residues: Endonuclease NucS (256 aa).

Residues 62 to 97 (AAKSAQHSRESVAGGAVDGDSATHSPESVAAGEPEK) form a disordered region.

This sequence belongs to the NucS endonuclease family.

It is found in the cytoplasm. Cleaves both 3' and 5' ssDNA extremities of branched DNA structures. This chain is Endonuclease NucS, found in Bifidobacterium longum (strain NCC 2705).